The primary structure comprises 445 residues: Retrovirus-related Pol polyprotein from type-1 retrotransposable element R2 (445 aa).

Residues 1 to 114 enclose the Reverse transcriptase domain; the sequence is QPSVFNLVKW…LSRDDSLAKA (114 aa). A nucleic acid-binding endonuclease region spans residues 115-445; it reads MLASAGPAAE…GATPRQLIEY (331 aa). Residues 380–389 show a composition bias toward basic residues; the sequence is GPRPAHHHQP. The disordered stretch occupies residues 380–445; that stretch reads GPRPAHHHQP…GATPRQLIEY (66 aa). Positions 396 to 405 are enriched in polar residues; sequence ATANTGTLQS.

The enzyme catalyses DNA(n) + a 2'-deoxyribonucleoside 5'-triphosphate = DNA(n+1) + diphosphate. This chain is Retrovirus-related Pol polyprotein from type-1 retrotransposable element R2, found in Popillia japonica (Japanese beetle).